We begin with the raw amino-acid sequence, 225 residues long: Jeltraxin (225 aa).

The N-terminal stretch at 1–19 is a signal peptide; it reads MKGLVIFFCLFYGCHVAGA. In terms of domain architecture, Pentraxin (PTX) spans 21 to 223; that stretch reads GKTIMLFPQK…IVVLRNQFIP (203 aa). A disulfide bridge connects residues C51 and C112. Ca(2+) contacts are provided by D75 and N76. A glycan (N-linked (GlcNAc...) asparagine) is linked at N87. Ca(2+) is bound by residues E153, Q154, D155, and Q165. N207 carries N-linked (GlcNAc...) asparagine glycosylation.

In terms of assembly, homodecamer consisting of two homopentamer units. Pentraxin (or pentaxin) have a discoid arrangement of 5 non-covalently bound subunits. It depends on Ca(2+) as a cofactor. Glycosylated. As to expression, oviduct. Highest expression levels were detected in the pars convoluta with lower levels detected in the pars recta. No expression was detected in the pars uterina.

The protein resides in the secreted. Functionally, calcium-dependent beta-galactose specific lectin. In Lepidobatrachus laevis (Budgett's frog), this protein is Jeltraxin.